We begin with the raw amino-acid sequence, 103 residues long: MFVKKGDKVKVITGKDKNKEGVVLAAFPKQDKVIVEGVNVVKKHQKPNQAAPQGGILEVEAPIHVSNVMVIDPSNGEATKVAFKEVDGKKVRVSKKTGEVLDK.

Belongs to the universal ribosomal protein uL24 family. Part of the 50S ribosomal subunit.

Its function is as follows. One of two assembly initiator proteins, it binds directly to the 5'-end of the 23S rRNA, where it nucleates assembly of the 50S subunit. In terms of biological role, one of the proteins that surrounds the polypeptide exit tunnel on the outside of the subunit. This chain is Large ribosomal subunit protein uL24, found in Enterococcus faecalis (strain ATCC 700802 / V583).